The primary structure comprises 430 residues: Cortical fragment-lytic enzyme (430 aa).

LysM domains are found at residues 3-47 (QIVT…ALIV) and 52-96 (NNYY…QLYV). The GH18 domain maps to 104–430 (VESIAYLQPS…VENFTITKKG (327 aa)). E219 (proton donor) is an active-site residue.

This sequence belongs to the glycosyl hydrolase 18 family. Chitinase class II subfamily.

The protein resides in the spore cortex. Its activity is regulated as follows. Inhibited by diethylpyrocarbonate. Its function is as follows. N-acetylglucosaminidase involved in cortex peptidoglycan degradation during germination. Cleaves only partially degraded spore peptidoglycans. Recognizes muramic acid delta-lactam residues specific to spore peptidoglycans. The polypeptide is Cortical fragment-lytic enzyme (Bacillus cereus).